A 337-amino-acid chain; its full sequence is Monoacylglycerol lipase ABHD6 (337 aa).

Topologically, residues 1-8 (MDLDVVNM) are extracellular. Residues 9–29 (FVIAGGTLAIPILAFVASFLL) form a helical; Signal-anchor for type II membrane protein membrane-spanning segment. Residues 30-337 (WPSALIRIYY…HNPDNNKKLN (308 aa)) lie on the Cytoplasmic side of the membrane. Serine 148 acts as the Nucleophile in catalysis. Residues aspartate 278 and histidine 306 each act as charge relay system in the active site.

Belongs to the AB hydrolase superfamily.

The protein localises to the late endosome membrane. Its subcellular location is the lysosome membrane. The protein resides in the mitochondrion membrane. It carries out the reaction Hydrolyzes glycerol monoesters of long-chain fatty acids.. The enzyme catalyses 1-octanoylglycerol + H2O = octanoate + glycerol + H(+). The catalysed reaction is 1-decanoylglycerol + H2O = decanoate + glycerol + H(+). It catalyses the reaction 1-dodecanoylglycerol + H2O = dodecanoate + glycerol + H(+). It carries out the reaction 1-tetradecanoylglycerol + H2O = tetradecanoate + glycerol + H(+). The enzyme catalyses 2-hexadecanoylglycerol + H2O = glycerol + hexadecanoate + H(+). The catalysed reaction is 2-(9Z-octadecenoyl)-glycerol + H2O = glycerol + (9Z)-octadecenoate + H(+). It catalyses the reaction 1-(9Z-octadecenoyl)-glycerol + H2O = glycerol + (9Z)-octadecenoate + H(+). It carries out the reaction 2-(9Z,12Z-octadecadienoyl)-glycerol + H2O = (9Z,12Z)-octadecadienoate + glycerol + H(+). The enzyme catalyses 2-(5Z,8Z,11Z,14Z-eicosatetraenoyl)-glycerol + H2O = glycerol + (5Z,8Z,11Z,14Z)-eicosatetraenoate + H(+). The catalysed reaction is 1-(5Z,8Z,11Z,14Z-eicosatetraenoyl)-glycerol + H2O = glycerol + (5Z,8Z,11Z,14Z)-eicosatetraenoate + H(+). It catalyses the reaction 1-(9Z,12Z-octadecadienoyl)-glycerol + H2O = (9Z,12Z)-octadecadienoate + glycerol + H(+). It carries out the reaction 3-(9Z-octadecenoyl)-sn-glycero-1-phospho-(3'-(9Z-octadecenoyl)-1'-sn-glycerol) + H2O = 3-(9Z-octadecenoyl)-sn-glycero-1-phospho-(1'-sn-glycerol) + (9Z)-octadecenoate + H(+). The enzyme catalyses (S,S)-2-(9Z-octadecenoyl)-sn-glycero-1-phospho-(2'-(9Z-octadecenoyl)-1'-sn-glycerol) + H2O = (S,S)-2-(9Z-octadecenoyl)-sn-glycero-1-phospho-(1'-sn-glycerol) + (9Z)-octadecenoate + H(+). The catalysed reaction is (R,R)-2-(9Z-octadecenoyl)-sn-glycero-3-phospho-(2'-(9Z-octadecenoyl)-3'-sn-glycerol) + H2O = (R,R)-2-(9Z-octadecenoyl)-sn-glycero-3-phospho-(3'-sn-glycerol) + (9Z)-octadecenoate + H(+). Lipase that preferentially hydrolysis medium-chain saturated monoacylglycerols including 2-arachidonoylglycerol. Through 2-arachidonoylglycerol degradation may regulate endocannabinoid signaling pathways. Also has a lysophosphatidyl lipase activity with a preference for lysophosphatidylglycerol among other lysophospholipids. Also able to degrade bis(monoacylglycero)phosphate (BMP) and constitutes the major enzyme for BMP catabolism. BMP, also known as lysobisphosphatidic acid, is enriched in late endosomes and lysosomes and plays a key role in the formation of intraluminal vesicles and in lipid sorting. The sequence is that of Monoacylglycerol lipase ABHD6 from Rattus norvegicus (Rat).